The sequence spans 299 residues: Peroxisomal biogenesis factor 19 (299 aa).

Positions 1-63 (MAAAEGDGGV…SPGDTAKDAL (63 aa)) are disordered. Residue Ala2 is modified to N-acetylalanine. The docking to the peroxisome membrane and binding to PEX3 stretch occupies residues 2 to 56 (AAAEGDGGVRAEADRELEELLESALDDFDKAKPSPAPPPTTTAPDASGPQKRSPG). A necessary for PEX19 function on peroxisome biogenesis region spans residues 2-91 (AAAEGDGGVR…QATAEFEKAM (90 aa)). Acidic residues predominate over residues 16–27 (RELEELLESALD). Ser35, Ser54, and Ser66 each carry phosphoserine. Thr236 is modified (phosphothreonine). Cys296 bears the Cysteine methyl ester mark. The S-farnesyl cysteine moiety is linked to residue Cys296. The propeptide at 297-299 (LIM) is removed in mature form.

This sequence belongs to the peroxin-19 family. Interacts with a broad range of peroxisomal membrane proteins, including PEX3, PEX10, PEX11A, PEX11B, PEX12, PEX13, PEX14 and PEX16, PXMP2/PMP22, PXMP4/PMP24, SLC25A17/PMP34, ABCD1/ALDP, ABCD2/ALDRP, and ABCD3/PMP70. Also interacts with the tumor suppressor CDKN2A/p19ARF.

The protein localises to the cytoplasm. It is found in the peroxisome membrane. Necessary for early peroxisomal biogenesis. Acts both as a cytosolic chaperone and as an import receptor for peroxisomal membrane proteins (PMPs). Binds and stabilizes newly synthesized PMPs in the cytoplasm by interacting with their hydrophobic membrane-spanning domains, and targets them to the peroxisome membrane by binding to the integral membrane protein PEX3. Excludes CDKN2A from the nucleus and prevents its interaction with MDM2, which results in active degradation of TP53. This chain is Peroxisomal biogenesis factor 19 (PEX19), found in Bos taurus (Bovine).